The following is a 214-amino-acid chain: Adenylate kinase (214 aa).

10-15 lines the ATP pocket; that stretch reads GAGKGT. The tract at residues 30-59 is NMP; the sequence is STGDMLRAAIKAGTELGKQAKTLMDAGQLV. Residues Thr31, Arg36, 57–59, 85–88, and Gln92 contribute to the AMP site; these read QLV and GFPR. The tract at residues 122-159 is LID; the sequence is GRRVHPASGRSYHVVYNPPKVEGKDDVTGEDLIIRADD. ATP is bound by residues Arg123 and 132–133; that span reads SY. Residues Arg156 and Arg167 each contribute to the AMP site. Gln200 contacts ATP.

This sequence belongs to the adenylate kinase family. Monomer.

It localises to the cytoplasm. It carries out the reaction AMP + ATP = 2 ADP. Its pathway is purine metabolism; AMP biosynthesis via salvage pathway; AMP from ADP: step 1/1. In terms of biological role, catalyzes the reversible transfer of the terminal phosphate group between ATP and AMP. Plays an important role in cellular energy homeostasis and in adenine nucleotide metabolism. This Actinobacillus succinogenes (strain ATCC 55618 / DSM 22257 / CCUG 43843 / 130Z) protein is Adenylate kinase.